We begin with the raw amino-acid sequence, 665 residues long: Lamin-A (665 aa).

The residue at position 1 (Met1) is an N-acetylmethionine. The segment at 1-29 (METPGQKRATRSTHTPLSPTRITRLQEKE) is head. Position 18 is a phosphoserine (Ser18). Residues 27 to 383 (EKEDLQGLND…KLLEGEEERL (357 aa)) enclose the IF rod domain. The interval 30-66 (DLQGLNDRLAVYIDKVRSLELENARLRLRITESEDVI) is coil 1A. Positions 67 to 76 (SREVTGIKSA) are linker 1. The interval 77–214 (YETELADARK…SIYNEEMRET (138 aa)) is coil 1B. The interval 215–238 (KRRHETRLVEVDNGRQREFESKLA) is linker 2. The tract at residues 239 to 383 (DALHELRAQH…KLLEGEEERL (145 aa)) is coil 2. 3 disordered regions span residues 381–441 (ERLR…SVEE), 550–581 (DDEDNDDMEHHHHHHHHHHDGQNSSGDPGEYN), and 602–641 (ASQGSGLVTGSSGSSSSSVTLTRTYRSTGGTSGGSGLGES). The segment at 384–664 (RLSPSPNTQK…AQVAPQNCSI (281 aa)) is tail. Ser388 is modified (phosphoserine). Over residues 399 to 411 (IASHSGAHISSSA) the composition is skewed to low complexity. The short motif at 413–418 (KRRRLE) is the Nuclear localization signal element. The region spanning 425–542 (SSFTQHARTT…EEVAMRKLVR (118 aa)) is the LTD domain. Over residues 427–436 (FTQHARTTGK) the composition is skewed to polar residues. The span at 605-630 (GSGLVTGSSGSSSSSVTLTRTYRSTG) shows a compositional bias: low complexity. At Cys662 the chain carries Cysteine methyl ester. Residue Cys662 is the site of S-farnesyl cysteine attachment. The propeptide at 663 to 665 (SIM) is removed in mature form.

This sequence belongs to the intermediate filament family. In terms of assembly, homodimer. Lamin dimers then assemble into dimeric head-to-tail polymers. Ultimately, two head-to-tail polymers assemble laterally into a protofilament with a uniformly shaped rod of 3.5 nm in diameter. Post-translationally, phosphorylation plays a key role in lamin organization, subcellular localization and nuclear envelope disintegration. Phosphorylation by CDK1 at Ser-18 at the onset of mitosis drives lamin disassembly and nuclear envelope breakdown.

The protein localises to the nucleus lamina. Its subcellular location is the nucleus envelope. The protein resides in the nucleus. It localises to the nucleoplasm. It is found in the nucleus matrix. Lamins are intermediate filament proteins that assemble into a filamentous meshwork, and which constitute the major components of the nuclear lamina, a fibrous layer on the nucleoplasmic side of the inner nuclear membrane. Lamins provide a framework for the nuclear envelope, bridging the nuclear envelope and chromatin, thereby playing an important role in nuclear assembly, chromatin organization, nuclear membrane and telomere dynamics. The structural integrity of the lamina is strictly controlled by the cell cycle, as seen by the disintegration and formation of the nuclear envelope in prophase and telophase, respectively. The protein is Lamin-A (lmna) of Xenopus laevis (African clawed frog).